Here is a 308-residue protein sequence, read N- to C-terminus: Protein FdhE homolog (308 aa).

It belongs to the FdhE family.

It is found in the cytoplasm. Its function is as follows. Necessary for formate dehydrogenase activity. The protein is Protein FdhE homolog of Edwardsiella ictaluri (strain 93-146).